Consider the following 288-residue polypeptide: Bifunctional protein FolD (288 aa).

NADP(+)-binding positions include 168 to 170 (GRG), T195, and V236.

This sequence belongs to the tetrahydrofolate dehydrogenase/cyclohydrolase family. Homodimer.

The enzyme catalyses (6R)-5,10-methylene-5,6,7,8-tetrahydrofolate + NADP(+) = (6R)-5,10-methenyltetrahydrofolate + NADPH. It carries out the reaction (6R)-5,10-methenyltetrahydrofolate + H2O = (6R)-10-formyltetrahydrofolate + H(+). It functions in the pathway one-carbon metabolism; tetrahydrofolate interconversion. In terms of biological role, catalyzes the oxidation of 5,10-methylenetetrahydrofolate to 5,10-methenyltetrahydrofolate and then the hydrolysis of 5,10-methenyltetrahydrofolate to 10-formyltetrahydrofolate. This Mycobacterium sp. (strain JLS) protein is Bifunctional protein FolD.